Reading from the N-terminus, the 432-residue chain is Succinate--CoA ligase [GDP-forming] subunit beta, mitochondrial (432 aa).

A mitochondrion-targeting transit peptide spans 1–37; the sequence is MASPVAAQAGKLLRALALRPRFLAAGSQAVQLTSRRW. The region spanning 46–274 is the ATP-grasp domain; sequence KKLMSDNGVR…NAEFRQKDIF (229 aa). Gln-57 is a binding site for GTP. Residue Lys-73 is modified to N6-acetyllysine. At Lys-78 the chain carries N6-succinyllysine. 90–92 lines the GTP pocket; the sequence is GRG. Residues Lys-132 and Lys-139 each carry the N6-acetyllysine modification. Leu-146 contributes to the GTP binding site. At Ser-161 the chain carries Phosphoserine. Residues Lys-200, Lys-218, and Lys-227 each carry the N6-acetyllysine modification. Residues Asn-243 and Asp-257 each contribute to the Mg(2+) site. An N6-acetyllysine mark is found at Lys-271 and Lys-291. Substrate is bound at residue Asn-308. Residue Lys-338 is modified to N6-succinyllysine. The residue at position 347 (Lys-347) is an N6-acetyllysine. A substrate-binding site is contributed by 365–367; it reads GIV. Residues Lys-386 and Lys-423 each carry the N6-acetyllysine modification.

The protein belongs to the succinate/malate CoA ligase beta subunit family. GTP-specific subunit beta subfamily. Heterodimer of an alpha and a beta subunit. The beta subunit determines specificity for GTP. The cofactor is Mg(2+). As to expression, mainly expressed in liver, kidney, heart, spleen and skeletal muscle. Also found in intestine and colon, and in low amounts in lung, brain, prostate, testis and ovary.

It is found in the mitochondrion. It carries out the reaction GTP + succinate + CoA = succinyl-CoA + GDP + phosphate. The protein operates within carbohydrate metabolism; tricarboxylic acid cycle; succinate from succinyl-CoA (ligase route): step 1/1. In terms of biological role, GTP-specific succinyl-CoA synthetase functions in the citric acid cycle (TCA), coupling the hydrolysis of succinyl-CoA to the synthesis of GTP and thus represents the only step of substrate-level phosphorylation in the TCA. The beta subunit provides nucleotide specificity of the enzyme and binds the substrate succinate, while the binding sites for coenzyme A and phosphate are found in the alpha subunit. The chain is Succinate--CoA ligase [GDP-forming] subunit beta, mitochondrial from Homo sapiens (Human).